The sequence spans 429 residues: Adenylosuccinate synthetase (429 aa).

GTP contacts are provided by residues 12 to 18 and 40 to 42; these read GDEGKGK and GHT. Asp13 acts as the Proton acceptor in catalysis. Mg(2+) contacts are provided by Asp13 and Gly40. IMP contacts are provided by residues 13 to 16, 38 to 41, Thr129, Arg143, Gln224, Thr239, and Arg303; these read DEGK and NAGH. Residue His41 is the Proton donor of the active site. Residue 299-305 coordinates substrate; that stretch reads ATTGRKR. Residues Arg305, 331 to 333, and 413 to 415 each bind GTP; these read KLD and SVG.

Belongs to the adenylosuccinate synthetase family. As to quaternary structure, homodimer. Mg(2+) serves as cofactor.

It is found in the cytoplasm. It carries out the reaction IMP + L-aspartate + GTP = N(6)-(1,2-dicarboxyethyl)-AMP + GDP + phosphate + 2 H(+). It functions in the pathway purine metabolism; AMP biosynthesis via de novo pathway; AMP from IMP: step 1/2. In terms of biological role, plays an important role in the de novo pathway of purine nucleotide biosynthesis. Catalyzes the first committed step in the biosynthesis of AMP from IMP. The polypeptide is Adenylosuccinate synthetase (Desulfosudis oleivorans (strain DSM 6200 / JCM 39069 / Hxd3) (Desulfococcus oleovorans)).